Consider the following 1124-residue polypeptide: Probable leucine-rich repeat receptor-like protein kinase At2g33170 (1124 aa).

An N-terminal signal peptide occupies residues 1–32 (MGWWIFEFKKESKSMFVGVLFLLTLLVWTSES). Topologically, residues 33–752 (LNSDGQFLLE…LKAGSARRGR (720 aa)) are extracellular. N-linked (GlcNAc...) asparagine glycosylation is found at N72, N96, and N131. LRR repeat units lie at residues 86–109 (VVTS…GGLV), 110–132 (NLVY…IGNC), 134–156 (KLEV…INKL), 158–180 (QLRS…IGDL), 182–205 (NLEE…GNLN), 206–228 (KLTT…IGKC), 230–252 (NLKL…IGML), 254–277 (KLQE…GNLT), 278–300 (SLET…IGNM), 302–325 (SLKK…GKLS), 326–348 (KVME…LSKI), 350–371 (ELRL…ELSK), 374–397 (NLAK…QNLT), 398–420 (SMRQ…LGLY), 422–444 (PLWV…ICQQ), 446–468 (NLIL…VLRC), 470–491 (SLLQ…ELCK), 494–516 (NLSA…IGTC), 518–540 (KLQR…ISKL), 542–564 (NLVT…IANC), 566–588 (MLQR…LGSL), 590–613 (QLEI…GNLT), 614–636 (HLTE…LGLL), 638–661 (SLQI…IGNL), 663–686 (LLMY…ENLS), and 687–709 (SLLG…QIFQ). The N-linked (GlcNAc...) asparagine glycan is linked to N192. N275 carries an N-linked (GlcNAc...) asparagine glycan. Residue N314 is glycosylated (N-linked (GlcNAc...) asparagine). N-linked (GlcNAc...) asparagine glycosylation occurs at N395. An N-linked (GlcNAc...) asparagine glycan is attached at N494. The N-linked (GlcNAc...) asparagine glycan is linked to N547. A glycan (N-linked (GlcNAc...) asparagine) is linked at N611. N-linked (GlcNAc...) asparagine glycans are attached at residues N644, N684, N692, N697, and N710. A helical transmembrane segment spans residues 753 to 773 (IIIIVSSVIGGISLLLIAIVV). The Cytoplasmic segment spans residues 774–1124 (HFLRNPVEPT…CSDLPPPAPP (351 aa)). 2 positions are modified to phosphothreonine: T808 and T816. The region spanning 819-1100 (FHDSYIVGRG…TMREVVLMLI (282 aa)) is the Protein kinase domain. ATP-binding positions include 825–833 (VGRGACGTV) and K847. Y901 and Y939 each carry phosphotyrosine. Residue D952 is the Proton acceptor of the active site. Phosphoserine is present on S986. Phosphotyrosine occurs at positions 994 and 1001. A Phosphothreonine modification is found at T1002.

Belongs to the protein kinase superfamily. Ser/Thr protein kinase family.

The protein localises to the membrane. It catalyses the reaction L-seryl-[protein] + ATP = O-phospho-L-seryl-[protein] + ADP + H(+). The catalysed reaction is L-threonyl-[protein] + ATP = O-phospho-L-threonyl-[protein] + ADP + H(+). This chain is Probable leucine-rich repeat receptor-like protein kinase At2g33170, found in Arabidopsis thaliana (Mouse-ear cress).